A 145-amino-acid polypeptide reads, in one-letter code: D-aminoacyl-tRNA deacylase (145 aa).

The Gly-cisPro motif, important for rejection of L-amino acids motif lies at 137–138; the sequence is GP.

The protein belongs to the DTD family. As to quaternary structure, homodimer.

The protein localises to the cytoplasm. It catalyses the reaction glycyl-tRNA(Ala) + H2O = tRNA(Ala) + glycine + H(+). The enzyme catalyses a D-aminoacyl-tRNA + H2O = a tRNA + a D-alpha-amino acid + H(+). An aminoacyl-tRNA editing enzyme that deacylates mischarged D-aminoacyl-tRNAs. Also deacylates mischarged glycyl-tRNA(Ala), protecting cells against glycine mischarging by AlaRS. Acts via tRNA-based rather than protein-based catalysis; rejects L-amino acids rather than detecting D-amino acids in the active site. By recycling D-aminoacyl-tRNA to D-amino acids and free tRNA molecules, this enzyme counteracts the toxicity associated with the formation of D-aminoacyl-tRNA entities in vivo and helps enforce protein L-homochirality. In Pseudomonas fluorescens (strain Pf0-1), this protein is D-aminoacyl-tRNA deacylase.